The sequence spans 238 residues: Ribonuclease PH (238 aa).

Residues Arg-86 and 124–126 (GTR) contribute to the phosphate site.

The protein belongs to the RNase PH family. As to quaternary structure, homohexameric ring arranged as a trimer of dimers.

The enzyme catalyses tRNA(n+1) + phosphate = tRNA(n) + a ribonucleoside 5'-diphosphate. Its function is as follows. Phosphorolytic 3'-5' exoribonuclease that plays an important role in tRNA 3'-end maturation. Removes nucleotide residues following the 3'-CCA terminus of tRNAs; can also add nucleotides to the ends of RNA molecules by using nucleoside diphosphates as substrates, but this may not be physiologically important. Probably plays a role in initiation of 16S rRNA degradation (leading to ribosome degradation) during starvation. This chain is Ribonuclease PH, found in Histophilus somni (strain 129Pt) (Haemophilus somnus).